We begin with the raw amino-acid sequence, 1253 residues long: Latent-transforming growth factor beta-binding protein 3 (1253 aa).

Residues 1–38 (MPGPRGAAHGLAPAMRQAGALGLLALLLLALLGPGGGA) form the signal peptide. The N-linked (GlcNAc...) asparagine glycan is linked to Asn86. An EGF-like 1 domain is found at 106–138 (RVVVCPLPCMNGGQCSSRNQCLCPPDFTGRFCQ). 3 disulfides stabilise this stretch: Cys110–Cys120, Cys114–Cys126, and Cys128–Cys137. Residues 244 to 270 (GPNAEGPASSQHLLPHPKPQHPRPPTQ) are disordered. The 55-residue stretch at 274–328 (GRCFQDTLPKQPCGSNPLPGLTKQEDCCGSIGTAWGQSKCHKCPQLQYTGVQKPG) folds into the TB 1 domain. 3 disulfide bridges follow: Cys276/Cys300, Cys286/Cys313, and Cys301/Cys316. Residue Asn346 is glycosylated (N-linked (GlcNAc...) asparagine). The EGF-like 2; calcium-binding domain maps to 352–392 (DINECAMPGMCRHGDCLNNPGSYRCVCPPGHSLGPSRTQCI). Disulfide bonds link Cys356–Cys367, Cys362–Cys376, Cys378–Cys391, Cys402–Cys425, Cys412–Cys437, Cys426–Cys440, and Cys427–Cys452. One can recognise a TB 2 domain in the interval 400–452 (SLCFRLVSTEHQCQHPLTTRLTRQLCCCSVGKAWGARCQRCPADGTAAFKEIC). The segment at 475–555 (FSLFLHPDGP…PTFHRFLPDL (81 aa)) is disordered. One can recognise an EGF-like 3 domain in the interval 571-612 (ETDECRLNQNICGHGQCVPGPSDYSCHCNAGYRSHPQHRYCV). Cystine bridges form between Cys575–Cys587, Cys582–Cys596, Cys598–Cys611, Cys617–Cys629, Cys622–Cys638, Cys661–Cys673, Cys667–Cys682, Cys684–Cys698, Cys745–Cys756, Cys751–Cys765, Cys767–Cys780, Cys786–Cys797, Cys792–Cys806, Cys808–Cys821, Cys827–Cys838, Cys833–Cys847, Cys849–Cys861, Cys867–Cys880, Cys874–Cys889, Cys891–Cys904, Cys916–Cys939, Cys926–Cys951, Cys940–Cys956, Cys941–Cys968, Cys994–Cys1007, Cys1002–Cys1016, Cys1018–Cys1031, Cys1037–Cys1048, Cys1043–Cys1057, Cys1059–Cys1072, Cys1113–Cys1127, and Cys1114–Cys1136. The 44-residue stretch at 613 to 656 (DVNECEAEPCGPGKGICMNTGGSYNCHCNRGYRLHVGAGGRSCV) folds into the EGF-like 4; calcium-binding domain. One can recognise an EGF-like 5; calcium-binding domain in the interval 657-699 (DLNECTKPHLCGDGGFCINFPGHYKCNCYPGYRLKASRPPICE). The EGF-like 6; calcium-binding domain occupies 741 to 781 (DVNECSEGTPCSPGWCENLPGSYRCTCAQGYEPAQDGLSCI). In terms of domain architecture, EGF-like 7; calcium-binding spans 782–822 (DVDECEAGKVCQDGICTNTPGSFQCQCLSGYHLSRDRSRCE). The EGF-like 8; calcium-binding domain maps to 823 to 861 (DIDECDFPAACIGGDCINTNGSYRCLCPQGHRLVGGRKC). An N-linked (GlcNAc...) asparagine glycan is attached at Asn842. The EGF-like 9; calcium-binding domain occupies 863 to 905 (DIDECSQDPGLCLPHGACENLQGSYVCVCDEGFTLTQDQHGCE). The region spanning 914-968 (KECYLNFDDTVFCDSVLATNVTQQECCCSLGAGWGDHCEIYPCPVYSSAEFHSLC) is the TB 3 domain. Asn933 is a glycosylation site (N-linked (GlcNAc...) asparagine). The region spanning 990-1032 (DIDECILFGAEICKEGKCVNTQPGYECYCKQGFYYDGNLLECV) is the EGF-like 10; calcium-binding domain. The 40-residue stretch at 1033-1072 (DVDECLDESNCRNGVCENTRGGYRCACTPPAEYSPAQRQC) folds into the EGF-like 11; calcium-binding domain. Positions 1086–1136 (EVCWGQRGEDGMCMGPLAGPALTFDDCCCRQGRGWGTQCRPCPPRGTGSQC) constitute a TB 4 domain. Residues 1138 to 1148 (TSQSESNSFWD) show a composition bias toward polar residues. The disordered stretch occupies residues 1138-1169 (TSQSESNSFWDTSPLLLGKSPRDEDSSEEDSD). The 28-residue stretch at 1204-1231 (DIDECRELNQRGLLCKSERCVNTSGSFR) folds into the EGF-like 12; calcium-binding domain. 2 disulfide bridges follow: Cys1208–Cys1223 and Cys1218–Cys1232. Residue Asn1225 is glycosylated (N-linked (GlcNAc...) asparagine).

Belongs to the LTBP family. In terms of assembly, forms part of the large latent transforming growth factor beta (TGFB1) precursor complex; removal is essential for activation of complex. Interacts with EFEMP2. Contains hydroxylated asparagine residues. In terms of processing, two intrachain disulfide bonds from the TB3 domain are rearranged upon TGFB1 binding, and form interchain bonds with TGFB1 propeptide, anchoring it to the extracellular matrix.

It is found in the secreted. Its subcellular location is the extracellular space. The protein resides in the extracellular matrix. Functionally, key regulator of transforming growth factor beta (TGFB1, TGFB2 and TGFB3) that controls TGF-beta activation by maintaining it in a latent state during storage in extracellular space. Associates specifically via disulfide bonds with the Latency-associated peptide (LAP), which is the regulatory chain of TGF-beta, and regulates integrin-dependent activation of TGF-beta. The chain is Latent-transforming growth factor beta-binding protein 3 (Ltbp3) from Mus musculus (Mouse).